The primary structure comprises 473 residues: Pre-mRNA-splicing factor PRP46 (473 aa).

Positions 1 to 14 are enriched in polar residues; that stretch reads MSTSLETPSGTSAG. 2 disordered regions span residues 1 to 21 and 103 to 126; these read MSTSLETPSGTSAGPSIVASG and GPNVKLIGGPEAEKASSSTPQAVA. 7 WD repeats span residues 180-219, 222-261, 264-303, 306-347, 349-388, 391-429, and 440-473; these read GHMGWVRAVAMDPGSQWFATGAGDRVIKIWDLASGELKLS, GHISTIRGLAVSDRHPYLFSCAEDKMVKCWDLETNKVIRH, GHFSGVYSLSVHPTLDVLVTGGRDASVRVWDMRTRANIFT, GHTS…NTLT, HKKSVRALAIHPTEYSFASASSGGNNIKKWKCPEGIFVNN, GHEAIINTLSINSENVLFSGADNGTLTLWDYKTGLPFQH, and DAEAGVFCSTFDKTGTRLITGGADKTIKVYSEQA.

The protein belongs to the WD repeat PRL1/PRL2 family. Associated with the spliceosome.

It is found in the cytoplasm. Its subcellular location is the nucleus. Its function is as follows. Involved in pre-mRNA splicing and required for cell cycle progression at G2/M. The chain is Pre-mRNA-splicing factor PRP46 (PRP46) from Cryptococcus neoformans var. neoformans serotype D (strain B-3501A) (Filobasidiella neoformans).